The primary structure comprises 472 residues: Arginine biosynthesis bifunctional protein ArgJ, mitochondrial (472 aa).

Positions 200, 229, 240, 327, 467, and 472 each coordinate substrate. T240 (nucleophile) is an active-site residue.

This sequence belongs to the ArgJ family. Heterodimer of an alpha and a beta chain. Post-translationally, the alpha and beta chains are autoproteolytically processed from a single precursor protein within the mitochondrion.

Its subcellular location is the mitochondrion matrix. It carries out the reaction N(2)-acetyl-L-ornithine + L-glutamate = N-acetyl-L-glutamate + L-ornithine. The catalysed reaction is L-glutamate + acetyl-CoA = N-acetyl-L-glutamate + CoA + H(+). It participates in amino-acid biosynthesis; L-arginine biosynthesis; L-ornithine and N-acetyl-L-glutamate from L-glutamate and N(2)-acetyl-L-ornithine (cyclic): step 1/1. Its pathway is amino-acid biosynthesis; L-arginine biosynthesis; N(2)-acetyl-L-ornithine from L-glutamate: step 1/4. In terms of biological role, catalyzes two activities which are involved in the cyclic version of arginine biosynthesis: the synthesis of acetylglutamate from glutamate and acetyl-CoA, and of ornithine by transacetylation between acetylornithine and glutamate. This is Arginine biosynthesis bifunctional protein ArgJ, mitochondrial from Talaromyces marneffei (strain ATCC 18224 / CBS 334.59 / QM 7333) (Penicillium marneffei).